The primary structure comprises 124 residues: Small ribosomal subunit protein uS12 (124 aa).

3-methylthioaspartic acid is present on Asp89.

It belongs to the universal ribosomal protein uS12 family. Part of the 30S ribosomal subunit. Contacts proteins S8 and S17. May interact with IF1 in the 30S initiation complex.

Functionally, with S4 and S5 plays an important role in translational accuracy. Interacts with and stabilizes bases of the 16S rRNA that are involved in tRNA selection in the A site and with the mRNA backbone. Located at the interface of the 30S and 50S subunits, it traverses the body of the 30S subunit contacting proteins on the other side and probably holding the rRNA structure together. The combined cluster of proteins S8, S12 and S17 appears to hold together the shoulder and platform of the 30S subunit. The protein is Small ribosomal subunit protein uS12 of Prochlorococcus marinus (strain SARG / CCMP1375 / SS120).